The following is a 246-amino-acid chain: Small ribosomal subunit protein uS2 (246 aa).

The protein belongs to the universal ribosomal protein uS2 family.

The chain is Small ribosomal subunit protein uS2 from Dictyoglomus turgidum (strain DSM 6724 / Z-1310).